Here is a 574-residue protein sequence, read N- to C-terminus: Phosphate permease PHO89 (574 aa).

Residues 1–5 lie on the Extracellular side of the membrane; that stretch reads MALHQ. A helical transmembrane segment spans residues 6–26; that stretch reads FDYIFAIAMLFAFLDAFNIGA. Over 27 to 43 the chain is Cytoplasmic; that stretch reads NDVANSFASSISSRSLK. Residues 44–64 traverse the membrane as a helical segment; that stretch reads YWQAMVLAGLCEFLGAVLAGA. The Extracellular segment spans residues 65–84; sequence RVSGTIKNNIIDSSIFTNDP. The helical transmembrane segment at 85–105 threads the bilayer; the sequence is AVLMLTMTSALIGSSCWLTFA. Over 106–117 the chain is Cytoplasmic; the sequence is TAIGMPVSTTHS. Residues 118–138 traverse the membrane as a helical segment; that stretch reads IVGGTIGAGIAAGGANGVVWG. Residues 139–145 lie on the Extracellular side of the membrane; the sequence is WSGVSQI. The chain crosses the membrane as a helical span at residues 146 to 166; that stretch reads IASWFIAPILAGAIAAIVFSI. Topologically, residues 167 to 184 are cytoplasmic; the sequence is SRFSVLEVKSLERSIKNA. A helical transmembrane segment spans residues 185–205; it reads LLLVGVLVFATFSILTMLIVW. Topologically, residues 206 to 222 are extracellular; it reads KGSPNLHLDDLSETETA. The chain crosses the membrane as a helical span at residues 223 to 243; that stretch reads VSIVLTGAIASIVYFIFFYPF. Over 244–354 the chain is Cytoplasmic; that stretch reads YRRKVLDQDW…SLLKQGPKKW (111 aa). Residues 301–332 form a disordered region; it reads EDEENKAASNSNDSVKNKEDIQEVDLVRTETE. Residues 315–332 are compositionally biased toward basic and acidic residues; that stretch reads VKNKEDIQEVDLVRTETE. A helical transmembrane segment spans residues 355–375; sequence PLLFWLVISHGWTQDVIHAQV. The Extracellular segment spans residues 376-398; the sequence is NDRDMLSGDLKGMYERSKFYDNR. A helical membrane pass occupies residues 399–419; that stretch reads VEYIYSVLQAITAATMSFAHG. Over 420–447 the chain is Cytoplasmic; sequence ANDVANATGPLSAVYVIWKTNTIGAKSE. A helical membrane pass occupies residues 448–468; it reads VPVWVLAYGGVALVIGCWTYG. The Extracellular segment spans residues 469–503; the sequence is YNIIKNLGNKMILQSPSRGFSIELAVAITTVMATQ. The chain crosses the membrane as a helical span at residues 504 to 524; that stretch reads LGIPTSTTQIAVGGIVAVGLC. Residues 525 to 541 lie on the Cytoplasmic side of the membrane; it reads NKDLKSVNWRMVAWCYS. A helical transmembrane segment spans residues 542-562; that stretch reads GWFLTLPIAGLIAGIINGIIL. Residues 563-574 lie on the Extracellular side of the membrane; that stretch reads NAPRFGVEYQMT.

It belongs to the inorganic phosphate transporter (PiT) (TC 2.A.20) family. Forms homodimers and higher order homooligomers.

It is found in the cell membrane. The enzyme catalyses 2 Na(+)(out) + phosphate(out) = 2 Na(+)(in) + phosphate(in). With respect to regulation, weakly stimulated by Li(+) and K(+). Inhibited by monensin. Inhibited by phosphonoacetic acid. Inhibited by methylphosphonate. Inhibited by dimethylphosphonate. Sodium-phosphate symporter. Active in early growth phase. The sequence is that of Phosphate permease PHO89 (PHO89) from Saccharomyces cerevisiae (strain ATCC 204508 / S288c) (Baker's yeast).